Consider the following 354-residue polypeptide: FAD synthetase 1, chloroplastic (354 aa).

The N-terminal 75 residues, 1 to 75, are a transit peptide targeting the chloroplast; sequence MLCGGSRASV…SQGDDHPELS (75 aa). The tract at residues 228 to 248 is disordered; it reads SVNTEEEDSKSKERGQVSSTR.

Requires Mg(2+) as cofactor.

The protein resides in the plastid. The protein localises to the chloroplast. It catalyses the reaction FMN + ATP + H(+) = FAD + diphosphate. It participates in cofactor biosynthesis; FAD biosynthesis; FAD from FMN: step 1/1. In terms of biological role, catalyzes the adenylation of flavin mononucleotide (FMN) to form flavin adenine dinucleotide (FAD) coenzyme. The sequence is that of FAD synthetase 1, chloroplastic from Arabidopsis thaliana (Mouse-ear cress).